Here is a 369-residue protein sequence, read N- to C-terminus: Caffeine synthase 1 (369 aa).

S-adenosyl-L-homocysteine is bound at residue Y24. T31 is a binding site for caffeine. S-adenosyl-L-homocysteine-binding residues include C66, N71, D103, L104, S138, and F139. Y156, H159, and W160 together coordinate caffeine. Residue N177 participates in Mg(2+) binding. R225 provides a ligand contact to caffeine. 3 residues coordinate Mg(2+): D263, F265, and N266. Position 321 (F321) interacts with caffeine.

It belongs to the methyltransferase superfamily. Type-7 methyltransferase family. It depends on Mg(2+) as a cofactor.

The catalysed reaction is theobromine + S-adenosyl-L-methionine = caffeine + S-adenosyl-L-homocysteine + H(+). It carries out the reaction 7-methylxanthine + S-adenosyl-L-methionine = theobromine + S-adenosyl-L-homocysteine + H(+). Its pathway is alkaloid biosynthesis. Involved in the biosynthesis of caffeine. Catalyzes the conversion of 7-methylxanthine (7mX) to theobromine and of theobromine to caffeine. This chain is Caffeine synthase 1, found in Camellia taliensis (Wild tea).